We begin with the raw amino-acid sequence, 216 residues long: DNA-directed RNA polymerase subunit alpha (216 aa).

This sequence belongs to the RNA polymerase alpha chain family. As to quaternary structure, in plastids the minimal PEP RNA polymerase catalytic core is composed of four subunits: alpha, beta, beta', and beta''. When a (nuclear-encoded) sigma factor is associated with the core the holoenzyme is formed, which can initiate transcription.

It is found in the plastid. Its subcellular location is the chloroplast. It carries out the reaction RNA(n) + a ribonucleoside 5'-triphosphate = RNA(n+1) + diphosphate. DNA-dependent RNA polymerase catalyzes the transcription of DNA into RNA using the four ribonucleoside triphosphates as substrates. The chain is DNA-directed RNA polymerase subunit alpha (rpoA) from Euglena granulata.